The chain runs to 291 residues: Small ribosomal subunit protein uS2 (291 aa).

Residues 255-291 form a disordered region; it reads AGAATGEWSEAQGAQWETGTGAPAADWAAEPAKESSW.

It belongs to the universal ribosomal protein uS2 family. As to quaternary structure, component of the small ribosomal subunit. Mature ribosomes consist of a small (40S) and a large (60S) subunit. The 40S subunit contains about 33 different proteins and 1 molecule of RNA (18S). The 60S subunit contains about 49 different proteins and 3 molecules of RNA (25S, 5.8S and 5S). Interacts with RPS21.

It is found in the cytoplasm. In terms of biological role, required for the assembly and/or stability of the 40S ribosomal subunit. Required for the processing of the 20S rRNA-precursor to mature 18S rRNA in a late step of the maturation of 40S ribosomal subunits. In Podospora anserina (strain S / ATCC MYA-4624 / DSM 980 / FGSC 10383) (Pleurage anserina), this protein is Small ribosomal subunit protein uS2.